The following is a 486-amino-acid chain: Protein nucleotidyltransferase YdiU (486 aa).

G90, G92, R93, K113, D125, G126, R176, and R183 together coordinate ATP. Catalysis depends on D252, which acts as the Proton acceptor. Residues N253 and D262 each contribute to the Mg(2+) site. D262 is a binding site for ATP.

It belongs to the SELO family. Mg(2+) serves as cofactor. Requires Mn(2+) as cofactor.

It catalyses the reaction L-seryl-[protein] + ATP = 3-O-(5'-adenylyl)-L-seryl-[protein] + diphosphate. It carries out the reaction L-threonyl-[protein] + ATP = 3-O-(5'-adenylyl)-L-threonyl-[protein] + diphosphate. The enzyme catalyses L-tyrosyl-[protein] + ATP = O-(5'-adenylyl)-L-tyrosyl-[protein] + diphosphate. The catalysed reaction is L-histidyl-[protein] + UTP = N(tele)-(5'-uridylyl)-L-histidyl-[protein] + diphosphate. It catalyses the reaction L-seryl-[protein] + UTP = O-(5'-uridylyl)-L-seryl-[protein] + diphosphate. It carries out the reaction L-tyrosyl-[protein] + UTP = O-(5'-uridylyl)-L-tyrosyl-[protein] + diphosphate. In terms of biological role, nucleotidyltransferase involved in the post-translational modification of proteins. It can catalyze the addition of adenosine monophosphate (AMP) or uridine monophosphate (UMP) to a protein, resulting in modifications known as AMPylation and UMPylation. In Pseudomonas paraeruginosa (strain DSM 24068 / PA7) (Pseudomonas aeruginosa (strain PA7)), this protein is Protein nucleotidyltransferase YdiU.